A 171-amino-acid chain; its full sequence is uncharacterized protein (171 aa).

Disordered regions lie at residues 1–41 and 114–147; these read MDAV…SKPK and DSLG…RPKR. A compositionally biased stretch (low complexity) spans 27–38; sequence AQQQQGPSAQGS. Positions 116-125 are enriched in polar residues; it reads LGNTASSSSM.

This is an uncharacterized protein from Mus musculus (Mouse).